The primary structure comprises 371 residues: Deoxyguanosinetriphosphate triphosphohydrolase-like protein (371 aa).

Residues 62–200 (RITHSIEVAQ…SAISDDIAYN (139 aa)) form the HD domain.

The protein belongs to the dGTPase family. Type 2 subfamily.

The polypeptide is Deoxyguanosinetriphosphate triphosphohydrolase-like protein (Pelagibacter ubique (strain HTCC1062)).